Reading from the N-terminus, the 339-residue chain is Anthranilate phosphoribosyltransferase (339 aa).

Residues G81, 84 to 85 (GD), S89, 91 to 94 (NVSS), 109 to 117 (KHGNRALSS), and A121 contribute to the 5-phospho-alpha-D-ribose 1-diphosphate site. G81 serves as a coordination point for anthranilate. Position 93 (S93) interacts with Mg(2+). N112 contributes to the anthranilate binding site. An anthranilate-binding site is contributed by R167. Mg(2+)-binding residues include D225 and E226.

The protein belongs to the anthranilate phosphoribosyltransferase family. As to quaternary structure, homodimer. Requires Mg(2+) as cofactor.

It catalyses the reaction N-(5-phospho-beta-D-ribosyl)anthranilate + diphosphate = 5-phospho-alpha-D-ribose 1-diphosphate + anthranilate. Its pathway is amino-acid biosynthesis; L-tryptophan biosynthesis; L-tryptophan from chorismate: step 2/5. Its function is as follows. Catalyzes the transfer of the phosphoribosyl group of 5-phosphorylribose-1-pyrophosphate (PRPP) to anthranilate to yield N-(5'-phosphoribosyl)-anthranilate (PRA). The sequence is that of Anthranilate phosphoribosyltransferase from Brucella canis (strain ATCC 23365 / NCTC 10854 / RM-666).